Consider the following 88-residue polypeptide: Small ribosomal subunit protein uS17 (88 aa).

It belongs to the universal ribosomal protein uS17 family. As to quaternary structure, part of the 30S ribosomal subunit.

In terms of biological role, one of the primary rRNA binding proteins, it binds specifically to the 5'-end of 16S ribosomal RNA. The sequence is that of Small ribosomal subunit protein uS17 from Prochlorococcus marinus (strain MIT 9215).